A 172-amino-acid chain; its full sequence is Small ribosomal subunit protein uS5 (172 aa).

Residues 17–80 (LREKMIAVNR…DEARRKMIKV (64 aa)) enclose the S5 DRBM domain.

Belongs to the universal ribosomal protein uS5 family. Part of the 30S ribosomal subunit. Contacts proteins S4 and S8.

With S4 and S12 plays an important role in translational accuracy. Its function is as follows. Located at the back of the 30S subunit body where it stabilizes the conformation of the head with respect to the body. This chain is Small ribosomal subunit protein uS5, found in Polynucleobacter asymbioticus (strain DSM 18221 / CIP 109841 / QLW-P1DMWA-1) (Polynucleobacter necessarius subsp. asymbioticus).